Consider the following 91-residue polypeptide: Small membrane A-kinase anchor protein (91 aa).

Gly-2 carries N-myristoyl glycine lipidation.

This sequence belongs to the small membrane AKAP family. May be palmitoylated at Cys-3.

The protein localises to the cell membrane. Functionally, binds to type I regulatory subunits of protein kinase A and may anchor/target them to the plasma membrane. This chain is Small membrane A-kinase anchor protein, found in Xenopus laevis (African clawed frog).